The chain runs to 205 residues: N-(5'-phosphoribosyl)anthranilate isomerase (205 aa).

The protein belongs to the TrpF family.

It carries out the reaction N-(5-phospho-beta-D-ribosyl)anthranilate = 1-(2-carboxyphenylamino)-1-deoxy-D-ribulose 5-phosphate. It participates in amino-acid biosynthesis; L-tryptophan biosynthesis; L-tryptophan from chorismate: step 3/5. In Thermotoga neapolitana (strain ATCC 49049 / DSM 4359 / NBRC 107923 / NS-E), this protein is N-(5'-phosphoribosyl)anthranilate isomerase.